Consider the following 478-residue polypeptide: ATP-dependent RNA helicase DDX19A (478 aa).

Ala-2 bears the N-acetylalanine mark. The interval 2–299 (ATDSWALAVD…DPNIIKLKRE (298 aa)) is N-terminal lobe. Lys-26 is covalently cross-linked (Glycyl lysine isopeptide (Lys-Gly) (interchain with G-Cter in SUMO1); alternate). A Glycyl lysine isopeptide (Lys-Gly) (interchain with G-Cter in SUMO2); alternate cross-link involves residue Lys-26. A disordered region spans residues 34–53 (TNGVIKTSTTAEKTEEEEKE). The residue at position 42 (Thr-42) is a Phosphothreonine. Positions 54 to 67 (DRAAQSLLNKLIRS) are N-terminal helix. Residues 91–119 (KSFEELRLKPQLLQGVYAMGFNRPSKIQE) carry the Q motif motif. Residues Gln-118 and 137–144 (SQSGTGKT) contribute to the ATP site. Residues 124-294 (MMLAEPPQNL…QKVVPDPNII (171 aa)) enclose the Helicase ATP-binding domain. Positions 241–244 (DEAD) match the DEAD box motif. A C-terminal lobe region spans residues 300–478 (EETLDTIKQY…DLDEIEKIAN (179 aa)). The Helicase C-terminal domain maps to 305–473 (TIKQYYVLCN…RLDTDDLDEI (169 aa)). Positions 428 and 431 each coordinate ATP.

Belongs to the DEAD box helicase family. DDX19/DBP5 subfamily. As to expression, found in testis, heart, brain, liver, skeletal muscle, and kidney.

It localises to the cytoplasm. The protein localises to the nucleus. The protein resides in the nucleoplasm. It catalyses the reaction ATP + H2O = ADP + phosphate + H(+). In terms of biological role, ATP-dependent RNA helicase involved in mRNA export from the nucleus. Rather than unwinding RNA duplexes, DDX19 functions as a remodeler of ribonucleoprotein particles, whereby proteins bound to nuclear mRNA are dissociated and replaced by cytoplasmic mRNA binding proteins. This is ATP-dependent RNA helicase DDX19A (Ddx19a) from Mus musculus (Mouse).